A 292-amino-acid polypeptide reads, in one-letter code: uncharacterized protein (292 aa).

The 59-residue stretch at 1-59 (MTITQLKVFVKIAETGSFTKAGQALNMTQPAVSHAISAIEAELDVKLIIRDRRNGLMLT) folds into the HTH lysR-type domain. Positions 18–37 (FTKAGQALNMTQPAVSHAIS) form a DNA-binding region, H-T-H motif.

It belongs to the LysR transcriptional regulatory family.

This is an uncharacterized protein from Bacillus subtilis (strain 168).